Here is a 312-residue protein sequence, read N- to C-terminus: Probable deoxyhypusine synthase (312 aa).

The active-site Nucleophile is lysine 285.

Belongs to the deoxyhypusine synthase family. The cofactor is NAD(+).

It catalyses the reaction [eIF5A protein]-L-lysine + spermidine = [eIF5A protein]-deoxyhypusine + propane-1,3-diamine. Its pathway is protein modification; eIF5A hypusination. Catalyzes the NAD-dependent oxidative cleavage of spermidine and the subsequent transfer of the butylamine moiety of spermidine to the epsilon-amino group of a specific lysine residue of the eIF-5A precursor protein to form the intermediate deoxyhypusine residue. The chain is Probable deoxyhypusine synthase from Saccharolobus islandicus (strain M.16.4 / Kamchatka #3) (Sulfolobus islandicus).